The chain runs to 561 residues: DISARM protein DrmB (561 aa).

It is found in the cytoplasm. Its function is as follows. Component of antiviral defense system DISARM (defense island system associated with restriction-modification), composed of DrmE, DrmA, DrmB, DrmC and DrmMII. DISARM is probably a multi-gene restriction module, this subunit has an unknown function. Expression of DISARM in B.subtilis (strain BEST7003) confers resistance to phages Nf, phi29, phi105, phi3T, SPO1, SPR and SPP1. Protection is over 10(7)-fold against phi3T, 10(4)-10(5)-fold against Nf, phi29, phi105 and SPR, 100-fold against SPO1 and 10-fold against SPP1. DISARM does not interfere with phage adsorption, but instead interferes with (phi3T) DNA replication early in its cycle, preventing replication, circularization and lysogeny and probably causes phage DNA degradation (DNA is degraded in SPP1-infected cells). The polypeptide is DISARM protein DrmB (Bacillus paralicheniformis (strain ATCC 9945a / NCIMB 11709 / CD-2)).